We begin with the raw amino-acid sequence, 78 residues long: Acyl carrier protein (78 aa).

Positions 2–77 (SEIASRVKAI…DAVSYIEEHA (76 aa)) constitute a Carrier domain. At Ser37 the chain carries O-(pantetheine 4'-phosphoryl)serine.

Belongs to the acyl carrier protein (ACP) family. 4'-phosphopantetheine is transferred from CoA to a specific serine of apo-ACP by AcpS. This modification is essential for activity because fatty acids are bound in thioester linkage to the sulfhydryl of the prosthetic group.

It localises to the cytoplasm. It participates in lipid metabolism; fatty acid biosynthesis. In terms of biological role, carrier of the growing fatty acid chain in fatty acid biosynthesis. The sequence is that of Acyl carrier protein from Bacteroides thetaiotaomicron (strain ATCC 29148 / DSM 2079 / JCM 5827 / CCUG 10774 / NCTC 10582 / VPI-5482 / E50).